Consider the following 280-residue polypeptide: 2-dehydro-3-deoxyphosphooctonate aldolase (280 aa).

This sequence belongs to the KdsA family.

The protein resides in the cytoplasm. It catalyses the reaction D-arabinose 5-phosphate + phosphoenolpyruvate + H2O = 3-deoxy-alpha-D-manno-2-octulosonate-8-phosphate + phosphate. Its pathway is carbohydrate biosynthesis; 3-deoxy-D-manno-octulosonate biosynthesis; 3-deoxy-D-manno-octulosonate from D-ribulose 5-phosphate: step 2/3. It participates in bacterial outer membrane biogenesis; lipopolysaccharide biosynthesis. This Thioalkalivibrio sulfidiphilus (strain HL-EbGR7) protein is 2-dehydro-3-deoxyphosphooctonate aldolase.